A 333-amino-acid chain; its full sequence is Gramillins biosynthetic cluster protein FGSG_00039 (333 aa).

Its pathway is mycotoxin biosynthesis. Part of the gene cluster that mediates the biosynthesis of gramillins A and B, bicyclic lipopeptides that induce cell death in maize leaves but not in wheat leaves. The nonribosomal peptide synthetase GRA1 incorporates respectively a glutamic adic (Glu), a leucine (Leu), a serine (Ser), a hydroxyglutamine (HOGln), a 2-amino decanoic acid, and 2 cysteins (CysB and CysA). The biosynthesis of 2-amino decanoic acid incorporated in gramillins could be initiated by a fatty acid synthase composed of the alpha and beta subunits FGSG_00036 and FGSG_11656. The cytochrome P450 monooxygenase FGSG_15680 could hydroxylate the fatty acid chain. Subsequent oxidation to the ketone by the oxidoreductase FGSG_00048 and transamination by aminotransferase FGSG_00049 could form 2-amino-decanoic acid. On the other hand, FGSG_15680 could also be responsible for the HO-modified glutamine at the gamma-position. Whether hydroxylation occurs on the fully assembled product or on the Gln residue prior to assembly into the gramillins requires further proof. The thioredoxin FGSG_00043 could also be required for the disulfide-bond formation between CysA and CysB. The specific involvement of the remaining proteins from the cluster is more difficult to discern, but could have broader regulatory (FGSG_00040 and FGSG_11657) or enzymatic functions (FGSG_00044 and FGSG_00045). The final C-domain of GRA1 does not possess the expected sequence of a termination CT domain, often implicated in macrocyclization and release of a cyclopeptidein fungal NRPs; and the thioesterase FGSG_00047 may act in concert with the terminal C-domain of GRA1 to catalyze the formation of the macrocyclic anhydride and release of the products. In Gibberella zeae (strain ATCC MYA-4620 / CBS 123657 / FGSC 9075 / NRRL 31084 / PH-1) (Wheat head blight fungus), this protein is Gramillins biosynthetic cluster protein FGSG_00039.